Consider the following 385-residue polypeptide: U6 small nuclear RNA (adenine-(43)-N(6))-methyltransferase (385 aa).

The S-adenosyl-L-methionine site is built by arginine 54, glycine 83, glutamate 106, and asparagine 155.

The protein belongs to the methyltransferase superfamily. METTL16/RlmF family.

It is found in the cytoplasm. The protein resides in the nucleus. It catalyses the reaction adenosine in U6 snRNA + S-adenosyl-L-methionine = N(6)-methyladenosine in U6 snRNA + S-adenosyl-L-homocysteine + H(+). In terms of biological role, RNA N6-methyltransferase that mediates N6-methylation of adenine of U6 small nuclear RNA (U6 snRNA). The sequence is that of U6 small nuclear RNA (adenine-(43)-N(6))-methyltransferase from Schizosaccharomyces pombe (strain 972 / ATCC 24843) (Fission yeast).